The sequence spans 586 residues: MAEGVPASPSSGEGSRGPHSGVIQWLVDNFCICEECSVPRCLMYEIYVETCGQNTENQVNPATFGKLVRLVFPDLGTRRLGTRGSARYHYDGICIKKSSFFYAQYCYLIGEKRYHSGDAIAFEKSTNYNSIIQQEATCEDHSPMKTDPVGSPLSEFRRCPFLEQEQAKKYSCNMMAFLADEYCNYCRDILRNVEDLLTSFWKSLQQDTVMLMSLPDVCQLFKCYDVQLYKGIEDVLLHDFLEDVSIQYLKSVQLFSKKFKLWLLNALEGVPALLQISKLKEVTLFVKRLRRKTYLSNMAKTMRMVLKSKRRVSVLKSDLQAIINQGTLATSKKALASDRSGADELENNPEMKCLRNLISLLGTSTDLRVFLSCLSSHLQAFVFQTSRSKEEFTKLAASFQLRWNLLLTAVSKAMTLCHRDSFGSWHLFHLLLLEYMIHILQSCLEEEEEEEDMGTVKEMLPDDPTLGQPDQALFHSLNSSLSQACASPSMEPLGVMPTHMGQGRYPVGVSNMVLRILGFLVDTAMGNKLIQVLLEDETTESAVKLSLPMGQEALITLKDGQQFVIQISDVPQSSEDIYFRENNANV.

The segment at residues 22 to 97 (VIQWLVDNFC…YHYDGICIKK (76 aa)) is a DNA-binding region (RFX-type winged-helix).

The protein belongs to the RFX family.

Its subcellular location is the nucleus. Its function is as follows. May be a transcription factor. The sequence is that of DNA-binding protein RFX8 (RFX8) from Homo sapiens (Human).